The following is a 375-amino-acid chain: Lipid droplet hydrolase 1 (375 aa).

Residues 88–358 enclose the AB hydrolase-1 domain; it reads VFVFVPGLAG…CSHNLCFDRP (271 aa). S177 functions as the Charge relay system in the catalytic mechanism. The Microbody targeting signal signature appears at 373–375; that stretch reads SKL.

The protein belongs to the AB hydrolase superfamily. Lipase family.

Its subcellular location is the lipid droplet. It carries out the reaction a triacylglycerol + H2O = a diacylglycerol + a fatty acid + H(+). Its function is as follows. Serine hydrolase required for the maintenance of steady state level of non-polar and polar lipids of lipid droplets and thus plays a role in maintaining the lipids homeostasis. Exhibits both esterase and triacylglycerol lipase activity. This Saccharomyces cerevisiae (strain ATCC 204508 / S288c) (Baker's yeast) protein is Lipid droplet hydrolase 1.